The chain runs to 91 residues: Large ribosomal subunit protein bL27 (91 aa).

It belongs to the bacterial ribosomal protein bL27 family.

This Chromobacterium violaceum (strain ATCC 12472 / DSM 30191 / JCM 1249 / CCUG 213 / NBRC 12614 / NCIMB 9131 / NCTC 9757 / MK) protein is Large ribosomal subunit protein bL27.